Consider the following 175-residue polypeptide: Adenine phosphoribosyltransferase (175 aa).

It belongs to the purine/pyrimidine phosphoribosyltransferase family. As to quaternary structure, homodimer.

Its subcellular location is the cytoplasm. It catalyses the reaction AMP + diphosphate = 5-phospho-alpha-D-ribose 1-diphosphate + adenine. Its pathway is purine metabolism; AMP biosynthesis via salvage pathway; AMP from adenine: step 1/1. In terms of biological role, catalyzes a salvage reaction resulting in the formation of AMP, that is energically less costly than de novo synthesis. In Synechococcus sp. (strain JA-2-3B'a(2-13)) (Cyanobacteria bacterium Yellowstone B-Prime), this protein is Adenine phosphoribosyltransferase.